An 85-amino-acid chain; its full sequence is Conotoxin Lt28.3 (85 aa).

The signal sequence occupies residues 1 to 21 (MPKLEMMLLVLLILPLCYIDA). The propeptide occupies 22 to 40 (VGPLPPWNMEDEIIEHWQK).

This sequence belongs to the conotoxin D superfamily. In terms of processing, contains 5 disulfide bonds. In terms of tissue distribution, expressed by the venom duct.

It is found in the secreted. Functionally, probable neurotoxin. This is Conotoxin Lt28.3 from Conus litteratus (Lettered cone).